The sequence spans 376 residues: tRNA-specific 2-thiouridylase MnmA (376 aa).

ATP is bound by residues 9-16 (AMSGGIDS) and Met-35. Cys-105 acts as the Nucleophile in catalysis. The cysteines at positions 105 and 202 are disulfide-linked. Residue Gly-129 participates in ATP binding. Positions 151 to 153 (KDQ) are interaction with tRNA. Catalysis depends on Cys-202, which acts as the Cysteine persulfide intermediate. The interval 312–313 (RY) is interaction with tRNA.

It belongs to the MnmA/TRMU family.

It is found in the cytoplasm. The catalysed reaction is S-sulfanyl-L-cysteinyl-[protein] + uridine(34) in tRNA + AH2 + ATP = 2-thiouridine(34) in tRNA + L-cysteinyl-[protein] + A + AMP + diphosphate + H(+). Functionally, catalyzes the 2-thiolation of uridine at the wobble position (U34) of tRNA, leading to the formation of s(2)U34. The sequence is that of tRNA-specific 2-thiouridylase MnmA from Amoebophilus asiaticus (strain 5a2).